The chain runs to 348 residues: RNA 3'-terminal phosphate cyclase (348 aa).

ATP is bound by residues glutamine 102 and 285–288; that span reads HMGD. Catalysis depends on histidine 311, which acts as the Tele-AMP-histidine intermediate.

Belongs to the RNA 3'-terminal cyclase family. Type 1 subfamily.

The protein localises to the cytoplasm. It catalyses the reaction a 3'-end 3'-phospho-ribonucleotide-RNA + ATP = a 3'-end 2',3'-cyclophospho-ribonucleotide-RNA + AMP + diphosphate. Catalyzes the conversion of 3'-phosphate to a 2',3'-cyclic phosphodiester at the end of RNA. The mechanism of action of the enzyme occurs in 3 steps: (A) adenylation of the enzyme by ATP; (B) transfer of adenylate to an RNA-N3'P to produce RNA-N3'PP5'A; (C) and attack of the adjacent 2'-hydroxyl on the 3'-phosphorus in the diester linkage to produce the cyclic end product. The biological role of this enzyme is unknown but it is likely to function in some aspects of cellular RNA processing. This is RNA 3'-terminal phosphate cyclase from Korarchaeum cryptofilum (strain OPF8).